Reading from the N-terminus, the 172-residue chain is Disulfide bond formation protein B (172 aa).

Residues 1-11 (MNPFRWSFRAQ) are Cytoplasmic-facing. A helical membrane pass occupies residues 12 to 28 (FLLGFLACAGLLAYAIY). Over 29-46 (VQLHLGLEPCPLCIFQRI) the chain is Periplasmic. An intrachain disulfide couples Cys-38 to Cys-41. The chain crosses the membrane as a helical span at residues 47-63 (AFAALAVFFLLGALHGP). Residues 64–70 (RAAAGRK) are Cytoplasmic-facing. Residues 71-88 (VYGVLSFIAAGVGMGIAA) form a helical membrane-spanning segment. Over 89–145 (RHVWVQIRPKDMMSSCGPPLSFLSETMGPFEVFRTVLTGTGDCGNIDWRFLGLSMPM) the chain is Periplasmic. A disulfide bridge links Cys-104 with Cys-131. Residues 146–164 (WSMVWFVGLALWALYAGFK) form a helical membrane-spanning segment. Topologically, residues 165–172 (VRRSSVHH) are cytoplasmic.

This sequence belongs to the DsbB family.

It is found in the cell inner membrane. In terms of biological role, required for disulfide bond formation in some periplasmic proteins. Acts by oxidizing the DsbA protein. In Xanthomonas axonopodis pv. citri (strain 306), this protein is Disulfide bond formation protein B.